The following is a 542-amino-acid chain: Tubby-related protein 1 (542 aa).

Positions 1–289 (MPLRDETLRE…RAPSPPVEVD (289 aa)) are disordered. Residues 91 to 104 (FLRDPEAKKRDPRE) are compositionally biased toward basic and acidic residues. Residues 114–132 (AEDEEEEEEEDEEDEEEEA) show a composition bias toward acidic residues. Residues 146 to 157 (PLREKSSADLKE) are compositionally biased toward basic and acidic residues. A compositionally biased stretch (basic residues) spans 262–275 (SNQKGKAKGKGKKK).

The protein belongs to the TUB family. As to quaternary structure, homodimer. May interact with ABCF1, PSIP1, ZEB1 and HMGB2 (Potential). Interacts with DNM1. Interacts with F-actin. Interacts with TUB. Interacts with TYRO3. Retina-specific.

It is found in the cytoplasm. Its subcellular location is the cell membrane. The protein resides in the secreted. It localises to the synapse. In terms of biological role, required for normal development of photoreceptor synapses. Required for normal photoreceptor function and for long-term survival of photoreceptor cells. Interacts with cytoskeleton proteins and may play a role in protein transport in photoreceptor cells. Binds lipids, especially phosphatidylinositol 3-phosphate, phosphatidylinositol 4-phosphate, phosphatidylinositol 5-phosphate, phosphatidylinositol 3,4-bisphosphate, phosphatidylinositol 4,5-bisphosphate, phosphatidylinositol 3,4,5-bisphosphate, phosphatidylserine and phosphatidic acid (in vitro). Contribute to stimulation of phagocytosis of apoptotic retinal pigment epithelium (RPE) cells and macrophages. The polypeptide is Tubby-related protein 1 (TULP1) (Homo sapiens (Human)).